The following is a 309-amino-acid chain: Calponin-2 (309 aa).

Position 2 is an N-acetylserine (serine 2). Lysine 8 and lysine 25 each carry N6-acetyllysine. The 105-residue stretch at 28 to 132 folds into the Calponin-homology (CH) domain; the sequence is PQKEAELRTW…SLLALAGKAK (105 aa). Serine 138 carries the post-translational modification Phosphoserine. Calponin-like repeat units follow at residues 166–191, 206–231, and 245–269; these read IGLQ…RHLY, ISLQ…RHIY, and MSLQ…RQIY. Positions 283–309 are disordered; it reads APSGTGDCPDPGEVPEYPPYYQEEAGY.

Belongs to the calponin family. Heart and smooth muscle.

Functionally, thin filament-associated protein that is implicated in the regulation and modulation of smooth muscle contraction. It is capable of binding to actin, calmodulin and tropomyosin. The interaction of calponin with actin inhibits the actomyosin Mg-ATPase activity. This Homo sapiens (Human) protein is Calponin-2 (CNN2).